The sequence spans 150 residues: Large ribosomal subunit protein uL13 (150 aa).

The disordered stretch occupies residues 130-150 (EHPHAAQQPKTLQLDPAASAQ).

This sequence belongs to the universal ribosomal protein uL13 family. As to quaternary structure, part of the 50S ribosomal subunit.

Its function is as follows. This protein is one of the early assembly proteins of the 50S ribosomal subunit, although it is not seen to bind rRNA by itself. It is important during the early stages of 50S assembly. This is Large ribosomal subunit protein uL13 from Synechococcus sp. (strain CC9311).